The primary structure comprises 729 residues: Fatty acid oxidation complex subunit alpha (729 aa).

Positions M1 to K189 are enoyl-CoA hydratase/isomerase. D296 contributes to the substrate binding site. The interval E311–A729 is 3-hydroxyacyl-CoA dehydrogenase. Residues M324, D343, V400–E402, K407, and S429 each bind NAD(+). The active-site For 3-hydroxyacyl-CoA dehydrogenase activity is H450. Residue N453 coordinates NAD(+). Residues N500 and Y660 each coordinate substrate. Residues R708–A729 are disordered.

This sequence in the N-terminal section; belongs to the enoyl-CoA hydratase/isomerase family. In the C-terminal section; belongs to the 3-hydroxyacyl-CoA dehydrogenase family. In terms of assembly, heterotetramer of two alpha chains (FadB) and two beta chains (FadA).

It catalyses the reaction a (3S)-3-hydroxyacyl-CoA + NAD(+) = a 3-oxoacyl-CoA + NADH + H(+). It carries out the reaction a (3S)-3-hydroxyacyl-CoA = a (2E)-enoyl-CoA + H2O. The catalysed reaction is a 4-saturated-(3S)-3-hydroxyacyl-CoA = a (3E)-enoyl-CoA + H2O. The enzyme catalyses (3S)-3-hydroxybutanoyl-CoA = (3R)-3-hydroxybutanoyl-CoA. It catalyses the reaction a (3Z)-enoyl-CoA = a 4-saturated (2E)-enoyl-CoA. It carries out the reaction a (3E)-enoyl-CoA = a 4-saturated (2E)-enoyl-CoA. Its pathway is lipid metabolism; fatty acid beta-oxidation. Its function is as follows. Involved in the aerobic and anaerobic degradation of long-chain fatty acids via beta-oxidation cycle. Catalyzes the formation of 3-oxoacyl-CoA from enoyl-CoA via L-3-hydroxyacyl-CoA. It can also use D-3-hydroxyacyl-CoA and cis-3-enoyl-CoA as substrate. This is Fatty acid oxidation complex subunit alpha from Salmonella newport (strain SL254).